A 317-amino-acid chain; its full sequence is Acetyl-coenzyme A carboxylase carboxyl transferase subunit alpha (317 aa).

The region spanning arginine 43–glutamate 293 is the CoA carboxyltransferase C-terminal domain.

This sequence belongs to the AccA family. As to quaternary structure, acetyl-CoA carboxylase is a heterohexamer composed of biotin carboxyl carrier protein (AccB), biotin carboxylase (AccC) and two subunits each of ACCase subunit alpha (AccA) and ACCase subunit beta (AccD).

Its subcellular location is the cytoplasm. The catalysed reaction is N(6)-carboxybiotinyl-L-lysyl-[protein] + acetyl-CoA = N(6)-biotinyl-L-lysyl-[protein] + malonyl-CoA. The protein operates within lipid metabolism; malonyl-CoA biosynthesis; malonyl-CoA from acetyl-CoA: step 1/1. Functionally, component of the acetyl coenzyme A carboxylase (ACC) complex. First, biotin carboxylase catalyzes the carboxylation of biotin on its carrier protein (BCCP) and then the CO(2) group is transferred by the carboxyltransferase to acetyl-CoA to form malonyl-CoA. This is Acetyl-coenzyme A carboxylase carboxyl transferase subunit alpha from Rhizobium rhizogenes (strain K84 / ATCC BAA-868) (Agrobacterium radiobacter).